The sequence spans 232 residues: Phosphatidylserine decarboxylase proenzyme (232 aa).

Ser190 acts as the Schiff-base intermediate with substrate; via pyruvic acid in catalysis. Ser190 is modified (pyruvic acid (Ser); by autocatalysis).

It belongs to the phosphatidylserine decarboxylase family. PSD-A subfamily. As to quaternary structure, heterodimer of a large membrane-associated beta subunit and a small pyruvoyl-containing alpha subunit. Requires pyruvate as cofactor. Post-translationally, is synthesized initially as an inactive proenzyme. Formation of the active enzyme involves a self-maturation process in which the active site pyruvoyl group is generated from an internal serine residue via an autocatalytic post-translational modification. Two non-identical subunits are generated from the proenzyme in this reaction, and the pyruvate is formed at the N-terminus of the alpha chain, which is derived from the carboxyl end of the proenzyme. The post-translation cleavage follows an unusual pathway, termed non-hydrolytic serinolysis, in which the side chain hydroxyl group of the serine supplies its oxygen atom to form the C-terminus of the beta chain, while the remainder of the serine residue undergoes an oxidative deamination to produce ammonia and the pyruvoyl prosthetic group on the alpha chain.

Its subcellular location is the cell membrane. It carries out the reaction a 1,2-diacyl-sn-glycero-3-phospho-L-serine + H(+) = a 1,2-diacyl-sn-glycero-3-phosphoethanolamine + CO2. The protein operates within phospholipid metabolism; phosphatidylethanolamine biosynthesis; phosphatidylethanolamine from CDP-diacylglycerol: step 2/2. Functionally, catalyzes the formation of phosphatidylethanolamine (PtdEtn) from phosphatidylserine (PtdSer). The sequence is that of Phosphatidylserine decarboxylase proenzyme from Cereibacter sphaeroides (strain ATCC 17025 / ATH 2.4.3) (Rhodobacter sphaeroides).